Here is a 356-residue protein sequence, read N- to C-terminus: Dihydroorotate dehydrogenase (quinone) (356 aa).

FMN is bound by residues 66–70 (AGFDK) and Thr-90. Lys-70 lines the substrate pocket. Substrate is bound at residue 115 to 119 (NRMGF). FMN contacts are provided by Asn-143 and Asn-176. Asn-176 provides a ligand contact to substrate. Residue Ser-179 is the Nucleophile of the active site. A substrate-binding site is contributed by Asn-181. The FMN site is built by Lys-212 and Thr-240. Substrate is bound at residue 241–242 (NT). Residues Gly-264, Gly-293, and 314–315 (YT) contribute to the FMN site.

This sequence belongs to the dihydroorotate dehydrogenase family. Type 2 subfamily. Monomer. The cofactor is FMN.

The protein resides in the cell membrane. It catalyses the reaction (S)-dihydroorotate + a quinone = orotate + a quinol. It functions in the pathway pyrimidine metabolism; UMP biosynthesis via de novo pathway; orotate from (S)-dihydroorotate (quinone route): step 1/1. Its function is as follows. Catalyzes the conversion of dihydroorotate to orotate with quinone as electron acceptor. The sequence is that of Dihydroorotate dehydrogenase (quinone) (pyrD) from Mycobacterium leprae (strain TN).